The primary structure comprises 349 residues: Succinylglutamate desuccinylase (349 aa).

Residues His70, Glu73, and His166 each coordinate Zn(2+). The active site involves Glu229.

This sequence belongs to the AspA/AstE family. Succinylglutamate desuccinylase subfamily. It depends on Zn(2+) as a cofactor.

The catalysed reaction is N-succinyl-L-glutamate + H2O = L-glutamate + succinate. It participates in amino-acid degradation; L-arginine degradation via AST pathway; L-glutamate and succinate from L-arginine: step 5/5. Transforms N(2)-succinylglutamate into succinate and glutamate. This is Succinylglutamate desuccinylase from Burkholderia thailandensis (strain ATCC 700388 / DSM 13276 / CCUG 48851 / CIP 106301 / E264).